Reading from the N-terminus, the 369-residue chain is Choline-phosphate cytidylyltransferase B (369 aa).

The tract at residues 1–27 (MPVLTTDAESETGIPKSLSNEPPSETM) is disordered. 4 residues coordinate CTP: I84, F85, H92, and K122. Phosphocholine is bound by residues K122 and W151. CTP is bound by residues H168, D169, Y173, Q195, R196, T197, and I200. The tract at residues 309-369 (RMLQALSPKQ…SMSEGDEDEK (61 aa)) is disordered. S315, S319, S322, S323, S329, S331, and S335 each carry phosphoserine. The segment covering 319–339 (SPVSSPTRSRSPSRSPSPTFS) has biased composition (low complexity). T345 carries the phosphothreonine modification. A phosphoserine mark is found at S346, S349, S350, S355, S360, and S362. Over residues 351 to 362 (PKAASASISSMS) the composition is skewed to low complexity.

This sequence belongs to the cytidylyltransferase family. Homodimer. As to expression, highly expressed in brain (at protein level). Expressed in liver (at protein level). Expressed at lower levels in lung and gonads. Expressed in brain (at protein level). Expressed at lower levels in lung and gonads.

It localises to the endoplasmic reticulum. Its subcellular location is the cytoplasm. The enzyme catalyses phosphocholine + CTP + H(+) = CDP-choline + diphosphate. The protein operates within phospholipid metabolism; phosphatidylcholine biosynthesis; phosphatidylcholine from phosphocholine: step 1/2. In terms of biological role, catalyzes the key rate-limiting step in the CDP-choline pathway for phosphatidylcholine biosynthesis. Plays an important role in ovary maturation and the maintenance of sperm production. Functionally, catalyzes the key rate-limiting step in the CDP-choline pathway for phosphatidylcholine biosynthesis. This is Choline-phosphate cytidylyltransferase B (Pcyt1b) from Mus musculus (Mouse).